We begin with the raw amino-acid sequence, 135 residues long: MACGLVASNLNLKPGECLRVRGELAADAKSFVLNLGKDSNNLCLHFNPRFNAHGDANTIVCNSKDDGTWGAEQREVAFPFQPGSVVEVCISFNQADLTVKLPDGHEFKFPNRLNMEAINYMSADGDFKIKCVAFE.

The residue at position 2 (alanine 2) is an N-acetylalanine. Residues 4–135 form the Galectin domain; sequence GLVASNLNLK…DFKIKCVAFE (132 aa). 2 positions are modified to N6-acetyllysine: lysine 13 and lysine 29. Serine 30 carries the post-translational modification Phosphoserine. Residues 45–49, histidine 53, asparagine 62, and 69–72 contribute to the a beta-D-galactoside site; these read HFNPR and WGAE. Lysine 108 bears the N6-acetyllysine; alternate mark. Lysine 108 carries the post-translational modification N6-succinyllysine; alternate. Position 128 is an N6-acetyllysine (lysine 128).

Homodimer. Binds LGALS3BP. Interacts with CD2, CD3, CD4, CD6, CD7, CD43, ALCAM and CD45. Interacts with laminin (via poly-N-acetyllactosamine). Interacts with SUSD2. Interacts with cargo receptor TMED10; the interaction mediates the translocation from the cytoplasm into the ERGIC (endoplasmic reticulum-Golgi intermediate compartment) and thereby secretion.

It localises to the secreted. The protein resides in the extracellular space. The protein localises to the extracellular matrix. Its subcellular location is the cytoplasm. Functionally, lectin that binds beta-galactoside and a wide array of complex carbohydrates. Plays a role in regulating apoptosis, cell proliferation and cell differentiation. Inhibits CD45 protein phosphatase activity and therefore the dephosphorylation of Lyn kinase. Strong inducer of T-cell apoptosis. Has hemagglutinating activity towards human erythrocytes. The chain is Galectin-1 from Capra hircus (Goat).